The following is a 351-amino-acid chain: NADP-dependent isopropanol dehydrogenase (351 aa).

Zn(2+) is bound by residues Cys37, His59, Glu60, and Asp150. Residues 175–178, 198–200, Tyr218, 265–267, and Lys340 contribute to the NADP(+) site; these read IGAV, GSR, and INY.

This sequence belongs to the zinc-containing alcohol dehydrogenase family. Homotetramer. Zn(2+) is required as a cofactor.

The enzyme catalyses propan-2-ol + NADP(+) = acetone + NADPH + H(+). In terms of biological role, alcohol dehydrogenase with a preference for medium chain secondary alcohols, such as 2-butanol and isopropanol. Has very low activity with primary alcohols, such as ethanol. Under physiological conditions, the enzyme reduces aldehydes and 2-ketones to produce secondary alcohols. Is active with acetaldehyde and propionaldehyde. The chain is NADP-dependent isopropanol dehydrogenase (adh) from Clostridium beijerinckii (Clostridium MP).